A 407-amino-acid chain; its full sequence is Serine/threonine transporter SstT (407 aa).

A run of 9 helical transmembrane segments spans residues 14–34, 48–68, 82–102, 141–161, 192–212, 218–238, 290–310, 316–336, and 363–383; these read GSLV…ATVS, FVGA…AASI, IVIL…LMSF, AVIT…GLAL, IGIF…AIAG, LVLL…IVFF, IPLG…ILTL, MGIQ…GVSA, and VAMQ…SAET.

Belongs to the dicarboxylate/amino acid:cation symporter (DAACS) (TC 2.A.23) family.

The protein resides in the cell inner membrane. It carries out the reaction L-serine(in) + Na(+)(in) = L-serine(out) + Na(+)(out). It catalyses the reaction L-threonine(in) + Na(+)(in) = L-threonine(out) + Na(+)(out). Functionally, involved in the import of serine and threonine into the cell, with the concomitant import of sodium (symport system). This Shewanella pealeana (strain ATCC 700345 / ANG-SQ1) protein is Serine/threonine transporter SstT.